Reading from the N-terminus, the 501-residue chain is MSSFILAIDQGTTSTRAILFNEEAKLVHYHHVEITQYFPQGGWVEHDPEEIWDSTLLCCRNVLEEASLRAADIAALGISNQRETTILWDRHTGQPLYRAIGWQDRRTVNFCEQLASQAGVLAKFVEKTGLILDPYFSCSKIKWILDNIKGAYEKAKRGELAFGTVDSYLLWKFTGGKCHATDATNASRTGLFNINQQRWDDELLTLFDIPKSLLPTVLDNCAQFGFTDLDLLGHKIPITAMIGDQQAAAVGQACIKPGMVKSTYGTGCFMLLNTGDQIIHSRNRLLATIAYRLNDTVTYGLEGSIFIAGAAVKWLRDPLHLIEKANDSESMASSVEDTGGVYLVPAFTGLGAPYWDPNARGALFGLTRNTQREHIVRAALEAVCYQSKDLVRAILNDGANLTTLRVDGGMAANNWLLQFLSDILGVNVDRSRCIESSALGTAFLAGLGAGLFDSLEEMTGLWQADRHFIPQMDPKKREELYDGWQKAVEKTLTPAAPLLFP.

T12 is a binding site for ADP. Residues T12, T13, and S14 each contribute to the ATP site. T12 lines the sn-glycerol 3-phosphate pocket. R16 serves as a coordination point for ADP. Residues R82, E83, Y135, and D244 each coordinate sn-glycerol 3-phosphate. Glycerol-binding residues include R82, E83, Y135, D244, and Q245. Residues T266, G309, G409, and N413 each contribute to the ADP site. The ATP site is built by T266, G309, and G409.

The protein belongs to the FGGY kinase family.

The catalysed reaction is glycerol + ATP = sn-glycerol 3-phosphate + ADP + H(+). The protein operates within polyol metabolism; glycerol degradation via glycerol kinase pathway; sn-glycerol 3-phosphate from glycerol: step 1/1. Its activity is regulated as follows. Inhibited by fructose 1,6-bisphosphate (FBP). In terms of biological role, key enzyme in the regulation of glycerol uptake and metabolism. Catalyzes the phosphorylation of glycerol to yield sn-glycerol 3-phosphate. The polypeptide is Glycerol kinase (Coxiella burnetii (strain Dugway 5J108-111)).